A 362-amino-acid chain; its full sequence is Leucoanthocyanidin dioxygenase (362 aa).

The region spanning 211–313 (MEELLLQKKI…RISWAVFCEP (103 aa)) is the Fe2OG dioxygenase domain. Residues H238, D240, and H294 each contribute to the Fe cation site.

This sequence belongs to the iron/ascorbate-dependent oxidoreductase family. Fe cation is required as a cofactor. L-ascorbate serves as cofactor.

It carries out the reaction a (2R,3S,4S)-leucoanthocyanidin + 2-oxoglutarate + O2 = a 4-H-anthocyanidin with a 3-hydroxy group + succinate + CO2 + 2 H2O. It functions in the pathway pigment biosynthesis; anthocyanin biosynthesis. In terms of biological role, oxidation of leucoanthocyanidins into anthocyanidins. The chain is Leucoanthocyanidin dioxygenase from Vitis vinifera (Grape).